The sequence spans 502 residues: Tryptophan decarboxylase TDC1 (502 aa).

Residues 1–18 (MGSLDSNYDTESPASVGQ) show a composition bias toward polar residues. The interval 1 to 21 (MGSLDSNYDTESPASVGQFNP) is disordered. Lys319 is modified (N6-(pyridoxal phosphate)lysine).

Belongs to the group II decarboxylase family. Requires pyridoxal 5'-phosphate as cofactor. As to expression, highly expressed in apex. Expressed in young stem and bark tissues. Expressed at low levels in leaves, fruits and seeds.

The catalysed reaction is L-tryptophan + H(+) = tryptamine + CO2. Functionally, involved in the biosynthesis of tryptamine. Supplies tryptamine for the indole moiety of camptothecin (CPT), an anti-cancer monoterpene alkaloid. Represents a key step in monoterpene indole alkaloid biosynthesis. Is specific for tryptophan, and inactive against tyrosine, phenylalanine and 3,4-dihydroxyphenylalanine (dopa). The sequence is that of Tryptophan decarboxylase TDC1 from Camptotheca acuminata (Happy tree).